We begin with the raw amino-acid sequence, 205 residues long: MSAIAPGMILLAYLCGSISSAILVCRIAGLPDPRDSGSGNPGATNVLRIGGKGAALAVLIFDVLKGMLPVWGAYALGVTPFWLGLIAIAACLGHIWPIFFHFRGGKGVATAFGAIAPIGWDLTGVMAGTWLLTVLLSGYSSLGAIVSALVAPFYVWWFKPQFTFPVAMLSCLILLRHHDNIQRLWRGQESKIWSRFRKKRPQKKE.

Helical transmembrane passes span 4 to 24, 80 to 100, 112 to 132, and 138 to 158; these read IAPG…AILV, PFWL…PIFF, FGAI…TWLL, and GYSS…VWWF.

It belongs to the PlsY family. Probably interacts with PlsX.

The protein localises to the cell inner membrane. It carries out the reaction an acyl phosphate + sn-glycerol 3-phosphate = a 1-acyl-sn-glycero-3-phosphate + phosphate. Its pathway is lipid metabolism; phospholipid metabolism. In terms of biological role, catalyzes the transfer of an acyl group from acyl-phosphate (acyl-PO(4)) to glycerol-3-phosphate (G3P) to form lysophosphatidic acid (LPA). This enzyme utilizes acyl-phosphate as fatty acyl donor, but not acyl-CoA or acyl-ACP. The sequence is that of Glycerol-3-phosphate acyltransferase from Cronobacter sakazakii (strain ATCC BAA-894) (Enterobacter sakazakii).